The following is a 69-amino-acid chain: Large ribosomal subunit protein uL29 (69 aa).

The protein belongs to the universal ribosomal protein uL29 family.

In Synechococcus sp. (strain WH7803), this protein is Large ribosomal subunit protein uL29.